Here is a 33-residue protein sequence, read N- to C-terminus: Suppressor protein HFN40 (33 aa).

In terms of biological role, suppresses expansion of husk leaf blades. The chain is Suppressor protein HFN40 from Zea mays (Maize).